We begin with the raw amino-acid sequence, 117 residues long: UPF0344 protein GWCH70_0687 (117 aa).

Transmembrane regions (helical) follow at residues 2–22 (THAH…AVSL), 32–52 (IVQM…GLLL), 55–75 (IASI…LIGA), and 97–117 (IVAF…FDLF).

The protein belongs to the UPF0344 family.

It localises to the cell membrane. The chain is UPF0344 protein GWCH70_0687 from Geobacillus sp. (strain WCH70).